We begin with the raw amino-acid sequence, 426 residues long: Serine--tRNA ligase (426 aa).

233–235 serves as a coordination point for L-serine; sequence TAE. 264–266 serves as a coordination point for ATP; sequence RSE. An L-serine-binding site is contributed by Glu-287. Residue 351 to 354 coordinates ATP; the sequence is EISS. Ser-387 provides a ligand contact to L-serine.

This sequence belongs to the class-II aminoacyl-tRNA synthetase family. Type-1 seryl-tRNA synthetase subfamily. In terms of assembly, homodimer. The tRNA molecule binds across the dimer.

The protein resides in the cytoplasm. It carries out the reaction tRNA(Ser) + L-serine + ATP = L-seryl-tRNA(Ser) + AMP + diphosphate + H(+). The enzyme catalyses tRNA(Sec) + L-serine + ATP = L-seryl-tRNA(Sec) + AMP + diphosphate + H(+). Its pathway is aminoacyl-tRNA biosynthesis; selenocysteinyl-tRNA(Sec) biosynthesis; L-seryl-tRNA(Sec) from L-serine and tRNA(Sec): step 1/1. Functionally, catalyzes the attachment of serine to tRNA(Ser). Is also able to aminoacylate tRNA(Sec) with serine, to form the misacylated tRNA L-seryl-tRNA(Sec), which will be further converted into selenocysteinyl-tRNA(Sec). This Clostridium botulinum (strain 657 / Type Ba4) protein is Serine--tRNA ligase.